Here is a 584-residue protein sequence, read N- to C-terminus: Proline--tRNA ligase (584 aa).

It belongs to the class-II aminoacyl-tRNA synthetase family. ProS type 1 subfamily. Homodimer.

The protein localises to the cytoplasm. The enzyme catalyses tRNA(Pro) + L-proline + ATP = L-prolyl-tRNA(Pro) + AMP + diphosphate. In terms of biological role, catalyzes the attachment of proline to tRNA(Pro) in a two-step reaction: proline is first activated by ATP to form Pro-AMP and then transferred to the acceptor end of tRNA(Pro). As ProRS can inadvertently accommodate and process non-cognate amino acids such as alanine and cysteine, to avoid such errors it has two additional distinct editing activities against alanine. One activity is designated as 'pretransfer' editing and involves the tRNA(Pro)-independent hydrolysis of activated Ala-AMP. The other activity is designated 'posttransfer' editing and involves deacylation of mischarged Ala-tRNA(Pro). The misacylated Cys-tRNA(Pro) is not edited by ProRS. This Mycobacterium sp. (strain KMS) protein is Proline--tRNA ligase.